Reading from the N-terminus, the 237-residue chain is DCN1-like protein 5 (237 aa).

Ser41 is subject to Phosphoserine. Residues 46-232 (FSRKKCLAWF…LLDEFVEWQK (187 aa)) enclose the DCUN1 domain.

As to quaternary structure, part of a complex that contains DCUN1D5, CUL1 and RBX1; this interaction is bridged by CUL1. Interacts (via the DCUN1 domain) with the unneddylated cullins: interacts with CUL1, CUL2, CUL3, CUL4A, CUL4B and CUL5; these interactions promote the cullin neddylation and the identity of the cullin dictates the affinity of the interaction. Interacts (via DCUN1 domain) with UBE2M (N-terminally acetylated form) and probably with UBE2F (N-terminally acetylated form). May also interact with regulators or subunits of cullin-RING ligases such as RBX1, RNF7, ELOB and DDB1; these interactions are bridged by cullins. Interacts with CAND1; this interaction is bridged by cullins and strongly inhibits the neddylation of cullins. These CAND-cullin-DCNL complexes can only be neddylated in the presence of a substrate adapter. Post-translationally, phosphorylation at Ser-41 is independent of cullin's interaction. Phosphorylated in response to both TICAM1 and MYD88 dependent Toll-like receptor (TLR) pathway activation. Phosphorylated in response to IL1B stimulation.

It is found in the nucleus. It localises to the cytoplasm. The protein localises to the cytoskeleton. The protein resides in the spindle. Contributes to the neddylation of all cullins by transferring NEDD8 from N-terminally acetylated NEDD8-conjugating E2s enzyme to different cullin C-terminal domain-RBX complexes which is necessary for the activation of cullin-RING E3 ubiquitin ligases (CRLs). May play a role in DNA damage response and may participate in cell proliferation and anchorage-independent cell growth. In Rattus norvegicus (Rat), this protein is DCN1-like protein 5.